A 59-amino-acid chain; its full sequence is Large ribosomal subunit protein uL30 (59 aa).

This sequence belongs to the universal ribosomal protein uL30 family. As to quaternary structure, part of the 50S ribosomal subunit.

In Streptococcus agalactiae serotype Ia (strain ATCC 27591 / A909 / CDC SS700), this protein is Large ribosomal subunit protein uL30.